A 370-amino-acid polypeptide reads, in one-letter code: MKYLPLYPILARYPFLRIASRVFSFNIEDELRKFLDTVEAAKRIVDKAIDGRVEYDRFTDESEFFCLGCEENCYDCQKRGTLEGCDLCMGCFENCSLYYPREAVERFYTNAKLSLLTYIASRMIVSAMEDWVRMRYAVNEASYYSRLLREDVEESGKEPIVRLVAIDLGAKLKGWKMHVSTFVRVSARIKDDKWRLVNRKLRNGWVETTKAEVLRGLEELLRMKLFEKVPVSEAVSEAVRELSRKAKRESEKFAMDLGEVDLNCLPPCMREILSELQRGMNIPHTARFAITSFLLNIGMTVDEIIALFKSAPDFDDEKTRYQVEHIAGERGKGAEYTSPSCDTMRTYSNCVADCRVSHPLIYYKKCKSKS.

Positions 268, 341, 350, and 354 each coordinate [4Fe-4S] cluster.

The protein belongs to the eukaryotic-type primase large subunit family. Heterodimer of a small subunit (PriS) and a large subunit (PriL). [4Fe-4S] cluster is required as a cofactor.

Functionally, regulatory subunit of DNA primase, an RNA polymerase that catalyzes the synthesis of short RNA molecules used as primers for DNA polymerase during DNA replication. Stabilizes and modulates the activity of the small subunit, increasing the rate of DNA synthesis, and conferring RNA synthesis capability. The DNA polymerase activity may enable DNA primase to also catalyze primer extension after primer synthesis. May also play a role in DNA repair. The chain is DNA primase large subunit PriL from Archaeoglobus fulgidus (strain ATCC 49558 / DSM 4304 / JCM 9628 / NBRC 100126 / VC-16).